The chain runs to 336 residues: N-acetyl-gamma-glutamyl-phosphate reductase (336 aa).

Cys156 is an active-site residue.

Belongs to the NAGSA dehydrogenase family. Type 1 subfamily.

It localises to the cytoplasm. The enzyme catalyses N-acetyl-L-glutamate 5-semialdehyde + phosphate + NADP(+) = N-acetyl-L-glutamyl 5-phosphate + NADPH + H(+). Its pathway is amino-acid biosynthesis; L-arginine biosynthesis; N(2)-acetyl-L-ornithine from L-glutamate: step 3/4. In terms of biological role, catalyzes the NADPH-dependent reduction of N-acetyl-5-glutamyl phosphate to yield N-acetyl-L-glutamate 5-semialdehyde. The polypeptide is N-acetyl-gamma-glutamyl-phosphate reductase (Moritella abyssi).